Consider the following 473-residue polypeptide: UDP-N-acetylmuramate--L-alanine ligase (473 aa).

Position 114–120 (114–120 (GTHGKTT)) interacts with ATP.

Belongs to the MurCDEF family.

It is found in the cytoplasm. It carries out the reaction UDP-N-acetyl-alpha-D-muramate + L-alanine + ATP = UDP-N-acetyl-alpha-D-muramoyl-L-alanine + ADP + phosphate + H(+). It participates in cell wall biogenesis; peptidoglycan biosynthesis. Functionally, cell wall formation. The chain is UDP-N-acetylmuramate--L-alanine ligase from Chlorobium luteolum (strain DSM 273 / BCRC 81028 / 2530) (Pelodictyon luteolum).